A 358-amino-acid polypeptide reads, in one-letter code: Methylthioribose-1-phosphate isomerase (358 aa).

Substrate-binding positions include 54–56 (RGA), Arg-96, and Gln-205. Catalysis depends on Asp-246, which acts as the Proton donor. Residue 256–257 (NK) coordinates substrate.

This sequence belongs to the eIF-2B alpha/beta/delta subunits family. MtnA subfamily.

The catalysed reaction is 5-(methylsulfanyl)-alpha-D-ribose 1-phosphate = 5-(methylsulfanyl)-D-ribulose 1-phosphate. It participates in amino-acid biosynthesis; L-methionine biosynthesis via salvage pathway; L-methionine from S-methyl-5-thio-alpha-D-ribose 1-phosphate: step 1/6. Catalyzes the interconversion of methylthioribose-1-phosphate (MTR-1-P) into methylthioribulose-1-phosphate (MTRu-1-P). This Ectopseudomonas mendocina (strain ymp) (Pseudomonas mendocina) protein is Methylthioribose-1-phosphate isomerase.